We begin with the raw amino-acid sequence, 166 residues long: Protein SprT (166 aa).

Residues 21 to 160 (ANQHFSREFP…CQQCQQTLAF (140 aa)) enclose the SprT-like domain. A Zn(2+)-binding site is contributed by His74. The active site involves Glu75. His78 contacts Zn(2+).

This sequence belongs to the SprT family. Zn(2+) serves as cofactor.

It localises to the cytoplasm. This is Protein SprT from Vibrio atlanticus (strain LGP32) (Vibrio splendidus (strain Mel32)).